Consider the following 306-residue polypeptide: D-alanine--D-alanine ligase (306 aa).

Positions 101–300 (KVVMAAAGIP…FGELVTWMVE (200 aa)) constitute an ATP-grasp domain. ATP is bound at residue 128–182 (LPPPYVLKPNTGGSSVGVFIVKEDQPHPPQELFRADWTFGESLMAEPFIKGLELT). Residues Asp-250, Glu-267, and Asn-269 each coordinate Mg(2+).

The protein belongs to the D-alanine--D-alanine ligase family. It depends on Mg(2+) as a cofactor. The cofactor is Mn(2+).

Its subcellular location is the cytoplasm. It catalyses the reaction 2 D-alanine + ATP = D-alanyl-D-alanine + ADP + phosphate + H(+). It functions in the pathway cell wall biogenesis; peptidoglycan biosynthesis. Its function is as follows. Cell wall formation. This is D-alanine--D-alanine ligase from Azorhizobium caulinodans (strain ATCC 43989 / DSM 5975 / JCM 20966 / LMG 6465 / NBRC 14845 / NCIMB 13405 / ORS 571).